A 336-amino-acid chain; its full sequence is Glucokinase (336 aa).

Position 13–18 (13–18 (ADVGGT)) interacts with ATP.

It belongs to the bacterial glucokinase family.

It is found in the cytoplasm. The enzyme catalyses D-glucose + ATP = D-glucose 6-phosphate + ADP + H(+). The sequence is that of Glucokinase from Cupriavidus metallidurans (strain ATCC 43123 / DSM 2839 / NBRC 102507 / CH34) (Ralstonia metallidurans).